The primary structure comprises 507 residues: Histone-lysine N-methyltransferase set-18 (507 aa).

8 residues coordinate Zn(2+): Cys49, Cys52, Cys65, Cys68, Cys74, Cys78, His86, and Cys90. The segment at 49–90 adopts an MYND-type zinc-finger fold; it reads CANCLRGPAPGEKLLRCGGCNFSMYCSKECQATAWLVHKPEC.

The protein belongs to the class V-like SAM-binding methyltransferase superfamily. Histone-lysine methyltransferase family. In terms of tissue distribution, expressed in pharyngeal and body wall muscles.

The enzyme catalyses L-lysyl(36)-[histone H3] + 2 S-adenosyl-L-methionine = N(6),N(6)-dimethyl-L-lysyl(36)-[histone H3] + 2 S-adenosyl-L-homocysteine + 2 H(+). Histone methyltransferase. Specifically methylates 'Lys-36' of histone H3, inducing di-methylation. Plays a role in modulating lifespan and oxidative stress resistance, in a manner dependent upon daf-16/Forkhead box protein O and the Insulin/IGF-1-like signaling (IIS) mediated pathway. Represses transcription of daf-16 isoform a, perhaps by methylating histone H3 at the daf-16 promoter, which in turn leads to recruitment of histone deacetylases and thus modulation of expression. The polypeptide is Histone-lysine N-methyltransferase set-18 (Caenorhabditis elegans).